Here is a 425-residue protein sequence, read N- to C-terminus: Pleckstrin homology domain-containing family A member 2 (425 aa).

One can recognise a PH 1 domain in the interval 7-113; it reads QNRICGFLDI…WVEALNQASK (107 aa). Residue Lys141 forms a Glycyl lysine isopeptide (Lys-Gly) (interchain with G-Cter in SUMO2) linkage. Residue Ser184 is modified to Phosphoserine. Residues 198–298 form the PH 2 domain; it reads PLIKSGYCVK…WIKEIGAAVQ (101 aa). Residues 312–330 show a composition bias toward low complexity; that stretch reads SISLTRPGSSSLSSGPNSI. The interval 312–332 is disordered; sequence SISLTRPGSSSLSSGPNSILC. Residues Ser314 and Ser349 each carry the phosphoserine modification. Residues 352-425 form a disordered region; that stretch reads SSWQPWTPVP…DDENIRTSDV (74 aa). The segment covering 400 to 410 has biased composition (basic and acidic residues); sequence RSEPQHPKEKP.

Binds MPDZ and PTPN13. Highly expressed in heart, kidney, spleen and peripheral blood leukocytes. Detected at lower levels in brain, skeletal muscle, colon, thymus, liver, small intestine, placenta and lung.

It localises to the cytoplasm. The protein localises to the cell membrane. Its subcellular location is the nucleus. In terms of biological role, binds specifically to phosphatidylinositol 3,4-diphosphate (PtdIns3,4P2), but not to other phosphoinositides. May recruit other proteins to the plasma membrane. The chain is Pleckstrin homology domain-containing family A member 2 (PLEKHA2) from Homo sapiens (Human).